A 521-amino-acid polypeptide reads, in one-letter code: Importin subunit alpha-4 (521 aa).

The interval 1-29 (MAENPGLENHRIKSFKNKGRDVETMRRHR) is disordered. At alanine 2 the chain carries N-acetylalanine. An IBB domain is found at 2–58 (AENPGLENHRIKSFKNKGRDVETMRRHRNEVTVELRKNKRDEHLLKKRNVPQEESLE). The span at 18–29 (KGRDVETMRRHR) shows a compositional bias: basic and acidic residues. A Nuclear localization signal motif is present at residues 43-52 (EHLLKKRNVP). Phosphoserine occurs at positions 56 and 60. Residues 66 to 106 (FKAQNVTLEAILQNATSDNPVVQLSAVQAARKLLSSDRNPP) form an ARM 1; truncated repeat. 8 ARM repeats span residues 107 to 149 (IDDL…TSAQ), 150 to 194 (TQAV…CRDY), 195 to 233 (VISLGVVKPLLSFINPSIPITFLRNVTWVIVNLCRNKDP), 234 to 278 (PPPM…EQIQ), 279 to 318 (MVIDSGVVPFLVPLLSHQEVKVQTAALRAVGNIVTGTDEQ), 319 to 360 (TQVV…NQQQ), 361 to 400 (VQAVIDAGLIPMIIHQLAKGDFGTQKEAAWAISNLTISGR), and 401 to 443 (KDQV…IMAG). The tract at residues 137–229 (WALTNIASGT…VTWVIVNLCR (93 aa)) is NLS binding site (major). The NLS binding site (minor) stretch occupies residues 306 to 394 (RAVGNIVTGT…QKEAAWAISN (89 aa)). An ARM 10; atypical repeat occupies 447–485 (STIAEIIEECGGLEKIEVLQQHENEDIYKLAFEIIDQYF). Residue tyrosine 484 is modified to Phosphotyrosine.

This sequence belongs to the importin alpha family. In terms of assembly, forms a complex with importin subunit beta-1. Interacts with DDX21. Interacts with NCBP1, NCBP2/CBP20 and NCBP3. Interacts with RCC1. Interacts with ZC3H11A. In terms of tissue distribution, detected more or less in all tissues examined (Ehrlich ascites tumor cells, testis, kidney, spleen, liver, heart, lung, thymus, skeletal muscle, cerebellum and brain (without cerebellum)).

It is found in the cytoplasm. Its subcellular location is the nucleus. In terms of biological role, functions in nuclear protein import as an adapter protein for nuclear receptor KPNB1. Binds specifically and directly to substrates containing either a simple or bipartite NLS motif. Docking of the importin/substrate complex to the nuclear pore complex (NPC) is mediated by KPNB1 through binding to nucleoporin FxFG repeats and the complex is subsequently translocated through the pore by an energy requiring, Ran-dependent mechanism. At the nucleoplasmic side of the NPC, Ran binds to importin-beta and the three components separate and importin-alpha and -beta are re-exported from the nucleus to the cytoplasm where GTP hydrolysis releases Ran from importin. The directionality of nuclear import is thought to be conferred by an asymmetric distribution of the GTP- and GDP-bound forms of Ran between the cytoplasm and nucleus. In vitro, mediates the nuclear import of human cytomegalovirus UL84 by recognizing a non-classical NLS. The protein is Importin subunit alpha-4 (Kpna3) of Mus musculus (Mouse).